Consider the following 382-residue polypeptide: Alpha-2B adrenergic receptor (382 aa).

A helical transmembrane segment spans residues 1–25; the sequence is AIAAVITFLILFTIFGNALVILAVL. Over 26–36 the chain is Cytoplasmic; it reads TSRSLRAPQNL. Residues 37–62 form a helical membrane-spanning segment; that stretch reads FLVSLAAADILVATLIIPFSLANELL. Residues 63-72 lie on the Extracellular side of the membrane; sequence GYWYFRHTWC. The cysteines at positions 72 and 151 are disulfide-linked. A helical transmembrane segment spans residues 73–95; the sequence is EVYLALDVLFCTSSIVHLCAISL. The Cytoplasmic portion of the chain corresponds to 96 to 117; the sequence is DRYWSVSRALEYNSKRTPRRIK. The helical transmembrane segment at 118-140 threads the bilayer; it reads GIILTVWLIAAFISLPPLIYKGD. Over 141-156 the chain is Extracellular; it reads KGKKPGGRPQCKLNEE. The helical transmembrane segment at 157-180 threads the bilayer; it reads AWYILSSSIGSFFAPCLIMILVYL. The Cytoplasmic segment spans residues 181–346; the sequence is RIYLIAKRRN…MNREKRFTFV (166 aa). Residues 192–305 are disordered; the sequence is QGPHGKQAPG…QGTPNFQPSQ (114 aa). Acidic residues predominate over residues 271–284; sequence EEEEEEEEEEEEEC. The segment covering 291–305 has biased composition (polar residues); it reads TSSSLQGTPNFQPSQ. Residues 347–370 traverse the membrane as a helical segment; it reads LAVVIGVFVLCWFPFFFSYSLGAI. At 371 to 379 the chain is on the extracellular side; that stretch reads CPQHCKVPH. Residues 380-382 form a helical membrane-spanning segment; sequence GLF.

Belongs to the G-protein coupled receptor 1 family. Adrenergic receptor subfamily. ADRA2B sub-subfamily. As to quaternary structure, interacts with RAB26. Interacts with PPP1R9B. Interacts with GGA1, GGA2 and GGA3.

The protein resides in the cell membrane. Alpha-2 adrenergic receptors mediate the catecholamine-induced inhibition of adenylate cyclase through the action of G proteins. In Didelphis virginiana (North American opossum), this protein is Alpha-2B adrenergic receptor (ADRA2B).